The chain runs to 224 residues: UPF0758 protein ABO_0214 (224 aa).

Positions 102-224 (PLDNPDKAGQ…WVSLASRGAV (123 aa)) constitute an MPN domain. Residues H173, H175, and D186 each contribute to the Zn(2+) site. A JAMM motif motif is present at residues 173–186 (HNHPSGVAEPSQSD).

This sequence belongs to the UPF0758 family.

In Alcanivorax borkumensis (strain ATCC 700651 / DSM 11573 / NCIMB 13689 / SK2), this protein is UPF0758 protein ABO_0214.